The primary structure comprises 357 residues: UPF0283 membrane protein BCAN_A1047 (357 aa).

Residues 1-36 (MSDKTPRKPTAFRLEQPARVSAASEQEEPRRPRAVK) form a disordered region. Positions 27 to 36 (EEPRRPRAVK) are enriched in basic and acidic residues. Transmembrane regions (helical) follow at residues 78 to 98 (ILFG…TEDL) and 109 to 129 (LGWT…AIIL).

It belongs to the UPF0283 family.

Its subcellular location is the cell inner membrane. The protein is UPF0283 membrane protein BCAN_A1047 of Brucella canis (strain ATCC 23365 / NCTC 10854 / RM-666).